Here is a 425-residue protein sequence, read N- to C-terminus: Isocitrate dehydrogenase [NADP] (425 aa).

T114 is a binding site for NADP(+). Residues S123, N125, R129, R139, and R162 each contribute to the D-threo-isocitrate site. D316 contributes to the Mg(2+) binding site. NADP(+) is bound by residues H348–Y354, N361, Y400, and R404.

It belongs to the isocitrate and isopropylmalate dehydrogenases family. In terms of assembly, homodimer. Mg(2+) is required as a cofactor. It depends on Mn(2+) as a cofactor.

It catalyses the reaction D-threo-isocitrate + NADP(+) = 2-oxoglutarate + CO2 + NADPH. In terms of biological role, catalyzes the oxidative decarboxylation of isocitrate to 2-oxoglutarate and carbon dioxide with the concomitant reduction of NADP(+). The protein is Isocitrate dehydrogenase [NADP] (icd) of Helicobacter pylori (strain ATCC 700392 / 26695) (Campylobacter pylori).